We begin with the raw amino-acid sequence, 155 residues long: Chromosomal passenger complex protein bir-1 (155 aa).

A BIR repeat occupies 20-87; the sequence is RLMTFKNFEY…KRDEPCEFVR (68 aa). Positions 57, 60, 76, and 83 each coordinate Zn(2+).

It belongs to the IAP family. In terms of assembly, component of the CPC complex which consists of icp-1; csc-1; bir-1 and air-2. Within the complex, interacts with csc-1, icp-1 and air-2. Interacts with csc-1 in a zinc-dependent-manner; the interaction is direct. Expressed in oocytes and sperm.

It is found in the chromosome. The protein resides in the cytoplasm. Its subcellular location is the cytoskeleton. It localises to the spindle. The protein localises to the midbody. Component of the chromosomal passenger complex (CPC), a complex that acts as a key regulator of chromosome segregation and cytokinesis. The CPC complex has essential functions at the centromere in ensuring correct chromosome condensation, alignment and segregation. In the complex, required to direct the Aurora B/air-2 kinase to chromosomes. Also functions in spindle midzone formation and in the formation of polar bodies during oogenesis. Required for the localization of the kinetochore component hcp-1 to chromosomes. Involved in the positive regulation of transcription. Involved in the transcriptional regulation of collagen genes. The chain is Chromosomal passenger complex protein bir-1 from Caenorhabditis elegans.